The following is a 563-amino-acid chain: NAD(P)H-quinone oxidoreductase chain 4 (563 aa).

The next 15 membrane-spanning stretches (helical) occupy residues 25-45 (FPWL…VPFI), 56-76 (WFAL…YLYG), 90-110 (VSWL…ISMP), 111-131 (LILL…PVTF), 133-153 (PKLF…VFAV), 157-177 (LLFF…LAIW), 189-209 (FIIY…AMGF), 230-250 (GFQL…LPIV), 264-284 (TAPV…YALM), 298-318 (FAPL…LTSF), 335-355 (MGFV…GAML), 356-376 (QMIS…ATYD), 397-417 (FALW…SGFV), 438-458 (IVIA…LLSM), and 485-505 (VYII…PRLM).

Belongs to the complex I subunit 4 family.

The protein resides in the cellular thylakoid membrane. The catalysed reaction is a plastoquinone + NADH + (n+1) H(+)(in) = a plastoquinol + NAD(+) + n H(+)(out). It carries out the reaction a plastoquinone + NADPH + (n+1) H(+)(in) = a plastoquinol + NADP(+) + n H(+)(out). NDH-1 shuttles electrons from NAD(P)H, via FMN and iron-sulfur (Fe-S) centers, to quinones in the respiratory chain. The immediate electron acceptor for the enzyme in this species is believed to be plastoquinone. Couples the redox reaction to proton translocation (for every two electrons transferred, four hydrogen ions are translocated across the cytoplasmic membrane), and thus conserves the redox energy in a proton gradient. The chain is NAD(P)H-quinone oxidoreductase chain 4 from Prochlorococcus marinus (strain MIT 9313).